A 140-amino-acid polypeptide reads, in one-letter code: Nucleoside diphosphate kinase (140 aa).

Lys-11, Phe-59, Arg-87, Thr-93, Arg-104, and Asn-114 together coordinate ATP. His-117 (pros-phosphohistidine intermediate) is an active-site residue.

The protein belongs to the NDK family. In terms of assembly, homotetramer. Mg(2+) is required as a cofactor.

It is found in the cytoplasm. It carries out the reaction a 2'-deoxyribonucleoside 5'-diphosphate + ATP = a 2'-deoxyribonucleoside 5'-triphosphate + ADP. The catalysed reaction is a ribonucleoside 5'-diphosphate + ATP = a ribonucleoside 5'-triphosphate + ADP. In terms of biological role, major role in the synthesis of nucleoside triphosphates other than ATP. The ATP gamma phosphate is transferred to the NDP beta phosphate via a ping-pong mechanism, using a phosphorylated active-site intermediate. This is Nucleoside diphosphate kinase from Nitrobacter hamburgensis (strain DSM 10229 / NCIMB 13809 / X14).